A 330-amino-acid chain; its full sequence is MKKIAVDAMGGDYAPQAIVEGVNQALSDFSDIEVQLYGDEAKIKQYLTATERVSIIHTDEKIDSDDEPTRAIRNKKNASMVLAAKAVKDGEADAVLSAGNTGALLAAGFFIVGRIKNIDRPGLMSTLPTVDGKGFDMLDLGANAENTAQHLHQYAVLGSFYAKNVRGIAQPRVGLLNNGTESSKGDPLRKETYELLVADESLNFIGNVEARDLMNGVADVVVADGFTGNAVLKSIEGTAMGIMGLLKTAITGGGLRAKLGALLLKDSLRGLKKQLNYSDVGGAVLFGVKAPVVKTHGSSDAKAVYSTIRQIRTMLETDVVAQTAREFSGE.

Belongs to the PlsX family. Homodimer. Probably interacts with PlsY.

It is found in the cytoplasm. The enzyme catalyses a fatty acyl-[ACP] + phosphate = an acyl phosphate + holo-[ACP]. It functions in the pathway lipid metabolism; phospholipid metabolism. In terms of biological role, catalyzes the reversible formation of acyl-phosphate (acyl-PO(4)) from acyl-[acyl-carrier-protein] (acyl-ACP). This enzyme utilizes acyl-ACP as fatty acyl donor, but not acyl-CoA. This chain is Phosphate acyltransferase, found in Streptococcus pneumoniae (strain 70585).